The primary structure comprises 190 residues: Large ribosomal subunit protein bL17 (190 aa).

A disordered region spans residues 128-190; the sequence is KKTAGRKAAQ…VEENNEQNKA (63 aa). The span at 143 to 154 shows a compositional bias: low complexity; it reads ALAPAEETPAPT. The span at 179–190 shows a compositional bias: acidic residues; the sequence is LAVEENNEQNKA.

It belongs to the bacterial ribosomal protein bL17 family. Part of the 50S ribosomal subunit. Contacts protein L32.

The polypeptide is Large ribosomal subunit protein bL17 (Salinispora tropica (strain ATCC BAA-916 / DSM 44818 / JCM 13857 / NBRC 105044 / CNB-440)).